The sequence spans 129 residues: Large ribosomal subunit protein bL12 (129 aa).

It belongs to the bacterial ribosomal protein bL12 family. In terms of assembly, homodimer. Part of the ribosomal stalk of the 50S ribosomal subunit. Forms a multimeric L10(L12)X complex, where L10 forms an elongated spine to which 2 to 4 L12 dimers bind in a sequential fashion. Binds GTP-bound translation factors.

Forms part of the ribosomal stalk which helps the ribosome interact with GTP-bound translation factors. Is thus essential for accurate translation. This chain is Large ribosomal subunit protein bL12, found in Pelotomaculum thermopropionicum (strain DSM 13744 / JCM 10971 / SI).